A 757-amino-acid polypeptide reads, in one-letter code: MLLRLLLAWAAAGPTLGQDPWAAEPRAACGPSSCYALFPRRRTFLEAWRACRELGGDLATPRTPEEAQRVDSLVGAGPASRLLWIGLQRQARQCQLQRPLRGFTWTTGDQDTAFTNWAQPASGGPCPAQRCVALEASGEHRWLEGSCTLAVDGYLCQFGFEGACPALQDEAGQAGPAVYTTPFHLVSTEFEWLPFGSVAAVQCQAGRGASLLCVKQPEGGVGWSRAGPLCLGTGCSPDNGGCEHECVEEVDGHVSCRCTEGFRLAADGRSCEDPCAQAPCEQQCEPGGPQGYSCHCRLGFRPAEDDPHRCVDTDECQIAGVCQQMCVNYVGGFECYCSEGHELEADGISCSPAGAMGAQASQDLGDELLDDGEDEEDEDEAWKAFNGGWTEMPGILWMEPTQPPDFALAYRPSFPEDREPQIPYPEPTWPPPLSAPRVPYHSSVLSVTRPVVVSATHPTLPSAHQPPVIPATHPALSRDHQIPVIAANYPDLPSAYQPGILSVSHSAQPPAHQPPMISTKYPELFPAHQSPMFPDTRVAGTQTTTHLPGIPPNHAPLVTTLGAQLPPQAPDALVLRTQATQLPIIPTAQPSLTTTSRSPVSPAHQISVPAATQPAALPTLLPSQSPTNQTSPISPTHPHSKAPQIPREDGPSPKLALWLPSPAPTAAPTALGEAGLAEHSQRDDRWLLVALLVPTCVFLVVLLALGIVYCTRCGPHAPNKRITDCYRWVIHAGSKSPTEPMPPRGSLTGVQTCRTSV.

The first 17 residues, 1–17 (MLLRLLLAWAAAGPTLG), serve as a signal peptide directing secretion. Residues 18–687 (QDPWAAEPRA…EHSQRDDRWL (670 aa)) are Extracellular-facing. The C-type lectin domain maps to 30 to 156 (GPSSCYALFP…CTLAVDGYLC (127 aa)). Threonine 60 is a glycosylation site (O-linked (GalNAc...) threonine). Cysteines 131 and 147 form a disulfide. The Sushi domain maps to 162–232 (GACPALQDEA…WSRAGPLCLG (71 aa)). Residues 312–351 (DTDECQIAGVCQQMCVNYVGGFECYCSEGHELEADGISCS) form the EGF-like; calcium-binding domain. 3 disulfide bridges follow: cysteine 316–cysteine 326, cysteine 322–cysteine 335, and cysteine 337–cysteine 350. 15 O-linked (GalNAc...) threonine glycosylation sites follow: threonine 401, threonine 428, threonine 448, threonine 456, threonine 459, threonine 472, threonine 519, threonine 541, threonine 543, threonine 544, threonine 545, threonine 587, threonine 593, threonine 594, and threonine 595. Residues serine 598 and serine 601 are each glycosylated (O-linked (GalNAc...) serine). 2 O-linked (GalNAc...) threonine glycosylation sites follow: threonine 612 and threonine 619. The segment covering 618–627 (PTLLPSQSPT) has biased composition (low complexity). A disordered region spans residues 618 to 662 (PTLLPSQSPTNQTSPISPTHPHSKAPQIPREDGPSPKLALWLPSP). O-linked (GalNAc...) serine glycans are attached at residues serine 623 and serine 625. O-linked (GalNAc...) threonine glycans are attached at residues threonine 627 and threonine 630. Residue serine 631 is glycosylated (O-linked (GalNAc...) serine). Residue threonine 636 is glycosylated (O-linked (GalNAc...) threonine). The O-linked (GalNAc...) serine glycan is linked to serine 640. Residues 688-708 (LVALLVPTCVFLVVLLALGIV) form a helical membrane-spanning segment. Over 709 to 757 (YCTRCGPHAPNKRITDCYRWVIHAGSKSPTEPMPPRGSLTGVQTCRTSV) the chain is Cytoplasmic. Residues 737–757 (PTEPMPPRGSLTGVQTCRTSV) are disordered. Serine 746 is modified (phosphoserine). Over residues 748 to 757 (TGVQTCRTSV) the composition is skewed to polar residues.

As to quaternary structure, interacts with PDGFRA; this interaction promotes PDGF receptor signaling pathway. Interacts with integrin beta-1/ITGB1. Interacts with insulin receptor/INSR; this interaction diminishes INSR autophosphorylation. In terms of processing, O-glycosylated with sialylated oligosaccharides. Post-translationally, may be N-glycosylated. In terms of tissue distribution, expressed in tumor endothelial cells but absent or barely detectable in normal endothelial cells. Expressed in metastatic lesions of the liver and during angiogenesis of corpus luteum formation and wound healing. Expressed in vascular endothelial cells of malignant tumors but not in normal blood vessels. Expressed in stromal fibroblasts. Strongly expressed in pericytes. Expressed on stromal cells and cells with lymphoid morphology such a T-cells.

It is found in the membrane. In terms of biological role, cell surface glycoprotein involved in various biological processes including angiogenesis, immune response modulation, and tissue remodeling and repair. Participates in pericyte proliferation through positive modulation of the PDGF receptor signaling pathway. Acts as a scaffold for factor X, triggering allosteric changes and the spatial re-alignment of factor X with the TF-factor VIIa complex, thereby enhancing coagulation activation. Modulates the insulin signaling pathway by interacting with insulin receptor/INSR and by diminishing its capacity to be autophosphorylated in response to insulin. Also regulates LPS-induced inflammatory response in macrophages by favoring the production of proinflammatory cytokines. In human, negatively regulates T-cell proliferation compared with stromal cells where it increases proliferation. This Homo sapiens (Human) protein is Endosialin (CD248).